The primary structure comprises 724 residues: Methionine--tRNA ligase (724 aa).

The short motif at 12 to 22 (PYVNNIPHLGN) is the 'HIGH' region element. The Zn(2+) site is built by Cys143, Cys146, Cys155, and Cys158. The 'KMSKS' region motif lies at 330 to 334 (KFSKS). An ATP-binding site is contributed by Lys333. The region spanning 560–665 (FREKVLLRVV…KNPIAGERII (106 aa)) is the tRNA-binding domain.

The protein belongs to the class-I aminoacyl-tRNA synthetase family. MetG type 1 subfamily. As to quaternary structure, homodimer. Zn(2+) serves as cofactor.

The protein resides in the cytoplasm. The enzyme catalyses tRNA(Met) + L-methionine + ATP = L-methionyl-tRNA(Met) + AMP + diphosphate. Functionally, is required not only for elongation of protein synthesis but also for the initiation of all mRNA translation through initiator tRNA(fMet) aminoacylation. The sequence is that of Methionine--tRNA ligase from Borreliella afzelii (strain PKo) (Borrelia afzelii).